The sequence spans 73 residues: Accessory secretory protein Asp5 (73 aa).

Positions M1–F30 are cleaved as a signal peptide. A helical membrane pass occupies residues I52–T72.

In terms of assembly, part of the accessory SecA2/SecY2 protein translocation apparatus required to export cell wall protein GspB.

Its subcellular location is the cell membrane. Its function is as follows. Part of the accessory SecA2/SecY2 system specifically required to export GspB, a serine-rich repeat cell wall protein encoded upstream in the same operon. In Streptococcus gordonii, this protein is Accessory secretory protein Asp5 (asp5).